A 1073-amino-acid chain; its full sequence is MPKRTDIKSILILGAGPIVIGQACEFDYSGAQACKALREEGFRVILVNSNPATIMTDPAMADATYIEPIKWQSVAKIIEKERPDAVLPTMGGQTALNCALDLERHGVLEKFGVEMIGANADTIDKAEDRSRFDKAMKDIGLECPRSGIAHSMEEANAVLEKLGFPCIIRPSFTMGGTGGGIAYNREEFEEICTRGLDLSPTKELLIDESLIGWKEYEMEVVRDKKDNCIIVCSIENFDPMGVHTGDSITVAPAQTLTDKEYQIMRNASLAVLREIGVETGGSNVQFGICPNTGRMVVIEMNPRVSRSSALASKATGFPIAKIAAKLAIGYTLDELQNDITGGRTPASFEPSIDYVVTKLPRFAFEKFPKADARLTTQMKSVGEVMAIGRTFQESLQKALRGLEVGACGLDPKVDLASPEAASILKRELTVPGAERIWYVADAMRSGMTCEEIFNLTGIDMWFLVQMEDLIKEEEKVKTLALSAIDKDYMLRLKRKGFSDQRLAVLLGITDKNLRRHRHKLEVFPVYKRVDTCAAEFATDTAYLYSTYEEECEANPSTRDKIMILGGGPNRIGQGIEFDYCCVHAALALREDGYETIMVNCNPETVSTDYDTSDRLYFEPLTLEDVLEVCRVEKPKGVIVHYGGQTPLKLARALEEAGVPIIGTSPDAIDRAEDRERFQQMVQRLSLLQPPNATVRSEEEAIRAAGSIGYPLVVRPSYVLGGRAMEIVYELDELKRYLREAVQVSNDSPVLLDHFLNCAIEMDVDAVCDGTDVVIGAIMQHIEQAGVHSGDSACSLPPYSLSKEVQDEVRVQVKKMALELGVVGLMNVQLALQGDKIYVIEVNPRASRTVPFVSKCIGTSLAMIAARVMAGKTLKELGFTQEIIPNFYSVKEAVFPFAKFPGVDPILGPEMKSTGEVMGVGDSFGEAFAKAQMGASEVLPTGGTAFISVRDDDKPQVAGVARDLIALGFEVVATAGTAKVIEAAGLKVRRVNKVTEGRPHVVDMIKNDEVSLIINTTEGRQSIADSYSIRRNALQHKIYCTTTIAAGEAICEALKFGPEKTVRRLQDLHAGLKA.

The carboxyphosphate synthetic domain stretch occupies residues 1–403 (MPKRTDIKSI…SLQKALRGLE (403 aa)). ATP is bound by residues R129, R169, G175, G176, E208, L210, E215, G241, V242, H243, Q285, and E299. One can recognise an ATP-grasp 1 domain in the interval 133 to 328 (DKAMKDIGLE…IAKIAAKLAI (196 aa)). 3 residues coordinate Mg(2+): Q285, E299, and N301. The Mn(2+) site is built by Q285, E299, and N301. Positions 404 to 553 (VGACGLDPKV…YSTYEEECEA (150 aa)) are oligomerization domain. The segment at 554–935 (NPSTRDKIMI…AFAKAQMGAS (382 aa)) is carbamoyl phosphate synthetic domain. Residues 678-869 (QQMVQRLSLL…LAMIAARVMA (192 aa)) form the ATP-grasp 2 domain. ATP-binding residues include R714, H753, L755, E760, G785, V786, H787, S788, Q828, and E840. Mg(2+) contacts are provided by Q828, E840, and N842. Mn(2+) contacts are provided by Q828, E840, and N842. The MGS-like domain maps to 936-1073 (EVLPTGGTAF…LQDLHAGLKA (138 aa)). The tract at residues 936–1073 (EVLPTGGTAF…LQDLHAGLKA (138 aa)) is allosteric domain.

This sequence belongs to the CarB family. As to quaternary structure, composed of two chains; the small (or glutamine) chain promotes the hydrolysis of glutamine to ammonia, which is used by the large (or ammonia) chain to synthesize carbamoyl phosphate. Tetramer of heterodimers (alpha,beta)4. Mg(2+) is required as a cofactor. It depends on Mn(2+) as a cofactor.

It carries out the reaction hydrogencarbonate + L-glutamine + 2 ATP + H2O = carbamoyl phosphate + L-glutamate + 2 ADP + phosphate + 2 H(+). The enzyme catalyses hydrogencarbonate + NH4(+) + 2 ATP = carbamoyl phosphate + 2 ADP + phosphate + 2 H(+). The protein operates within amino-acid biosynthesis; L-arginine biosynthesis; carbamoyl phosphate from bicarbonate: step 1/1. It participates in pyrimidine metabolism; UMP biosynthesis via de novo pathway; (S)-dihydroorotate from bicarbonate: step 1/3. Its function is as follows. Large subunit of the glutamine-dependent carbamoyl phosphate synthetase (CPSase). CPSase catalyzes the formation of carbamoyl phosphate from the ammonia moiety of glutamine, carbonate, and phosphate donated by ATP, constituting the first step of 2 biosynthetic pathways, one leading to arginine and/or urea and the other to pyrimidine nucleotides. The large subunit (synthetase) binds the substrates ammonia (free or transferred from glutamine from the small subunit), hydrogencarbonate and ATP and carries out an ATP-coupled ligase reaction, activating hydrogencarbonate by forming carboxy phosphate which reacts with ammonia to form carbamoyl phosphate. This Pseudomonas putida (strain ATCC 47054 / DSM 6125 / CFBP 8728 / NCIMB 11950 / KT2440) protein is Carbamoyl phosphate synthase large chain.